A 488-amino-acid polypeptide reads, in one-letter code: RNA binding exosome specificity factor Mmi1 (488 aa).

3 stretches are compositionally biased toward polar residues: residues 1-14 (MSNT…SSKS), 33-47 (LNES…TTHT), and 54-66 (SVLS…NFSS). Disordered stretches follow at residues 1-20 (MSNT…ELPN) and 25-80 (RSLW…DAPI). The segment covering 71-80 (PAPESHDAPI) has biased composition (basic and acidic residues). The segment at 95–122 (GKYDFSRHCTDYGHSYEWPYFRSLRRES) is interaction with erh1. Disordered regions lie at residues 163–185 (SRLH…RRLA) and 225–261 (SYPV…TRAS). Phosphothreonine is present on Thr176. 6 positions are modified to phosphoserine: Ser178, Ser230, Ser231, Ser261, Ser263, and Ser265. A compositionally biased stretch (low complexity) spans 289–299 (SYLLSNSSNDS). The interval 289–328 (SYLLSNSSNDSASRKEKPKARASTPPPLNFSRASEHRNEK) is disordered. Ser311 carries the post-translational modification Phosphoserine. Thr312 carries the post-translational modification Phosphothreonine. Residues 350–476 (SRYFIMLCDN…DEGSRLCTLI (127 aa)) enclose the YTH domain.

In terms of assembly, component of the erh1-mmi1 complex composed of mmi1 and erh1. Interacts (via N-terminus) with erh1 in a 2:2 stoichiometry. Interacts with rrp6.

Its subcellular location is the nucleus. In terms of biological role, RNA-binding protein that recognizes and binds N6-methyladenosine (m6A)-containing RNAs, a modification present at internal sites of mRNAs and some non-coding RNAs. Functions alone and as part of the erh1-mmi1 complex, to recruit the CCR4-NOT complex and the NURS complex to target RNAs. Suppresses the meiotic program during vegetative growth and promotes the meiotic program during mating. Binds to DSR (determinant of selective removal) regions in meiotic mRNA, and recruits the NURS complex to targets. Recruitment of NURS complex to target mRNAs promotes mRNA decay by engagement of the nuclear exosome, and formation of heterochromatin islands at meiotic genes silenced by the exosome. Recruitment of the CCR4-NOT complex to target RNAs promotes heterochromatin formation at RNAi-dependent heterochromatin domains (HOODs), including a subset of meiotic genes, lncRNAs and retrotransposons. Recruitment of the CCR4-NOT complex to rDNA promotes rDNA heterochromatin assembly. Promotes non-canonical transcription termination at meiotic genes and prevents lncRNA transcription from invading and repressing adjacent genes. In Schizosaccharomyces pombe (strain 972 / ATCC 24843) (Fission yeast), this protein is RNA binding exosome specificity factor Mmi1 (mmi1).